The chain runs to 420 residues: Serine hydroxymethyltransferase (420 aa).

Residues L121 and 125–127 (GHL) each bind (6S)-5,6,7,8-tetrahydrofolate. At K229 the chain carries N6-(pyridoxal phosphate)lysine.

Belongs to the SHMT family. Homodimer. The cofactor is pyridoxal 5'-phosphate.

The protein localises to the cytoplasm. It carries out the reaction (6R)-5,10-methylene-5,6,7,8-tetrahydrofolate + glycine + H2O = (6S)-5,6,7,8-tetrahydrofolate + L-serine. The protein operates within one-carbon metabolism; tetrahydrofolate interconversion. Its pathway is amino-acid biosynthesis; glycine biosynthesis; glycine from L-serine: step 1/1. Functionally, catalyzes the reversible interconversion of serine and glycine with tetrahydrofolate (THF) serving as the one-carbon carrier. This reaction serves as the major source of one-carbon groups required for the biosynthesis of purines, thymidylate, methionine, and other important biomolecules. Also exhibits THF-independent aldolase activity toward beta-hydroxyamino acids, producing glycine and aldehydes, via a retro-aldol mechanism. This is Serine hydroxymethyltransferase from Aggregatibacter actinomycetemcomitans (Actinobacillus actinomycetemcomitans).